Consider the following 313-residue polypeptide: Protoheme IX farnesyltransferase (313 aa).

8 consecutive transmembrane segments (helical) span residues 34-54, 56-76, 105-125, 128-148, 152-172, 173-193, 243-263, and 291-311; these read VIEL…RGTV, PLLI…ANTL, HALI…WWTT, LSAH…TLVL, TSQN…IGWS, AVTG…FFWT, LALA…TWFL, and YLAV…PTLF.

Belongs to the UbiA prenyltransferase family. Protoheme IX farnesyltransferase subfamily.

The protein localises to the cell membrane. The catalysed reaction is heme b + (2E,6E)-farnesyl diphosphate + H2O = Fe(II)-heme o + diphosphate. Its pathway is porphyrin-containing compound metabolism; heme O biosynthesis; heme O from protoheme: step 1/1. Converts heme B (protoheme IX) to heme O by substitution of the vinyl group on carbon 2 of heme B porphyrin ring with a hydroxyethyl farnesyl side group. The polypeptide is Protoheme IX farnesyltransferase (Mycolicibacterium vanbaalenii (strain DSM 7251 / JCM 13017 / BCRC 16820 / KCTC 9966 / NRRL B-24157 / PYR-1) (Mycobacterium vanbaalenii)).